Here is a 134-residue protein sequence, read N- to C-terminus: Profilin-3 (134 aa).

An intrachain disulfide couples C13 to C118. Positions 84-100 (AVIRGKKGSGGITIKKT) match the Involved in PIP2 interaction motif.

This sequence belongs to the profilin family. As to quaternary structure, occurs in many kinds of cells as a complex with monomeric actin in a 1:1 ratio. Phosphorylated by MAP kinases.

The protein localises to the cytoplasm. The protein resides in the cytoskeleton. Binds to actin and affects the structure of the cytoskeleton. At high concentrations, profilin prevents the polymerization of actin, whereas it enhances it at low concentrations. In Olea europaea (Common olive), this protein is Profilin-3.